Consider the following 579-residue polypeptide: Probable cytochrome c oxidase subunit 1-alpha (579 aa).

The tract at residues 1–21 (MSILNEPQGAAAAEDSYENEL) is disordered. A helical membrane pass occupies residues 44–64 (IGTLYLVTSFAFFCIGGVMAL). Histidine 90 is a binding site for Fe(II)-heme a. Helical transmembrane passes span 93-113 (IMLLMFATPLFAGFANWIMPL), 125-145 (LNMFAYWLYLFGSLIAVGGFL), 174-194 (MWIMGLAFSGFGTILGSVNFI), 217-237 (VLLTGVLVLLAFPVLAAALFA), 262-282 (LFWFFGHPEVYIIALPFFGII), and 295-315 (FGYMGLIGATIAIAGLSVTVW). Cu cation is bound by residues histidine 268 and tyrosine 272. Positions 268–272 (HPEVY) form a cross-link, 1'-histidyl-3'-tyrosine (His-Tyr). Residues histidine 317 and histidine 318 each coordinate Cu cation. Transmembrane regions (helical) follow at residues 319–339 (MYVTGGVLLPFFSFMTFLIAV), 363–383 (MLWATGFLITFTFGGLTGVIL), 397–417 (FVVAHFHYVVFGTVVFAMFSG), 437–457 (ITFWTLFVGFHGTFLIQHWLG), and 480–500 (ISTICSFLLGLSILPFLYNVW). A heme a3-binding site is contributed by histidine 401. Residue histidine 403 participates in Fe(II)-heme a binding.

The protein belongs to the heme-copper respiratory oxidase family. Associates with subunits II, III and IV to form cytochrome c oxidase. Requires Cu(2+) as cofactor. Heme is required as a cofactor.

The protein resides in the cell membrane. The enzyme catalyses 4 Fe(II)-[cytochrome c] + O2 + 8 H(+)(in) = 4 Fe(III)-[cytochrome c] + 2 H2O + 4 H(+)(out). It participates in energy metabolism; oxidative phosphorylation. Functionally, cytochrome c oxidase is the component of the respiratory chain that catalyzes the reduction of oxygen to water. Subunits 1-3 form the functional core of the enzyme complex. CO I is the catalytic subunit of the enzyme. Electrons originating in cytochrome c are transferred via the copper A center of subunit 2 and heme A of subunit 1 to the bimetallic center formed by heme A3 and copper B. This Streptomyces avermitilis (strain ATCC 31267 / DSM 46492 / JCM 5070 / NBRC 14893 / NCIMB 12804 / NRRL 8165 / MA-4680) protein is Probable cytochrome c oxidase subunit 1-alpha (ctaD1).